The primary structure comprises 245 residues: 1-(5-phosphoribosyl)-5-[(5-phosphoribosylamino)methylideneamino] imidazole-4-carboxamide isomerase (245 aa).

The active-site Proton acceptor is the aspartate 7. The Proton donor role is filled by aspartate 129.

Belongs to the HisA/HisF family.

The protein localises to the cytoplasm. It catalyses the reaction 1-(5-phospho-beta-D-ribosyl)-5-[(5-phospho-beta-D-ribosylamino)methylideneamino]imidazole-4-carboxamide = 5-[(5-phospho-1-deoxy-D-ribulos-1-ylimino)methylamino]-1-(5-phospho-beta-D-ribosyl)imidazole-4-carboxamide. Its pathway is amino-acid biosynthesis; L-histidine biosynthesis; L-histidine from 5-phospho-alpha-D-ribose 1-diphosphate: step 4/9. In Serratia proteamaculans (strain 568), this protein is 1-(5-phosphoribosyl)-5-[(5-phosphoribosylamino)methylideneamino] imidazole-4-carboxamide isomerase.